Consider the following 188-residue polypeptide: GMP synthase [glutamine-hydrolyzing] subunit A (188 aa).

Positions 3–188 constitute a Glutamine amidotransferase type-1 domain; that stretch reads PLYVVNNYGQ…FSICTGQNKG (186 aa). C75 (nucleophile) is an active-site residue. Residues H162 and E164 contribute to the active site.

Heterodimer composed of a glutamine amidotransferase subunit (A) and a GMP-binding subunit (B).

The catalysed reaction is XMP + L-glutamine + ATP + H2O = GMP + L-glutamate + AMP + diphosphate + 2 H(+). Its pathway is purine metabolism; GMP biosynthesis; GMP from XMP (L-Gln route): step 1/1. Functionally, catalyzes the synthesis of GMP from XMP. This chain is GMP synthase [glutamine-hydrolyzing] subunit A, found in Methanospirillum hungatei JF-1 (strain ATCC 27890 / DSM 864 / NBRC 100397 / JF-1).